A 434-amino-acid chain; its full sequence is Serine hydroxymethyltransferase (434 aa).

(6S)-5,6,7,8-tetrahydrofolate contacts are provided by residues Leu-133 and 137–139 (GHL). Lys-242 carries the N6-(pyridoxal phosphate)lysine modification.

This sequence belongs to the SHMT family. Homodimer. It depends on pyridoxal 5'-phosphate as a cofactor.

It localises to the cytoplasm. It catalyses the reaction (6R)-5,10-methylene-5,6,7,8-tetrahydrofolate + glycine + H2O = (6S)-5,6,7,8-tetrahydrofolate + L-serine. It functions in the pathway one-carbon metabolism; tetrahydrofolate interconversion. It participates in amino-acid biosynthesis; glycine biosynthesis; glycine from L-serine: step 1/1. Catalyzes the reversible interconversion of serine and glycine with tetrahydrofolate (THF) serving as the one-carbon carrier. This reaction serves as the major source of one-carbon groups required for the biosynthesis of purines, thymidylate, methionine, and other important biomolecules. Also exhibits THF-independent aldolase activity toward beta-hydroxyamino acids, producing glycine and aldehydes, via a retro-aldol mechanism. The protein is Serine hydroxymethyltransferase of Bradyrhizobium sp. (strain BTAi1 / ATCC BAA-1182).